The sequence spans 211 residues: Uracil phosphoribosyltransferase (211 aa).

5-phospho-alpha-D-ribose 1-diphosphate is bound by residues Arg-78, Arg-103, and Asp-130 to Ser-138. Residues Ile-193 and Gly-198–Ala-200 contribute to the uracil site. Asp-199 is a binding site for 5-phospho-alpha-D-ribose 1-diphosphate.

The protein belongs to the UPRTase family. Mg(2+) is required as a cofactor.

The enzyme catalyses UMP + diphosphate = 5-phospho-alpha-D-ribose 1-diphosphate + uracil. The protein operates within pyrimidine metabolism; UMP biosynthesis via salvage pathway; UMP from uracil: step 1/1. Allosterically activated by GTP. Its function is as follows. Catalyzes the conversion of uracil and 5-phospho-alpha-D-ribose 1-diphosphate (PRPP) to UMP and diphosphate. The polypeptide is Uracil phosphoribosyltransferase (Acinetobacter baumannii (strain ATCC 17978 / DSM 105126 / CIP 53.77 / LMG 1025 / NCDC KC755 / 5377)).